The primary structure comprises 896 residues: Translation initiation factor IF-2 (896 aa).

Disordered stretches follow at residues His53–Lys81 and Ala117–Asp301. The span at Thr60–Ala79 shows a compositional bias: polar residues. A compositionally biased stretch (basic and acidic residues) spans Ala117–Val227. The segment covering Ala254–Gly266 has biased composition (low complexity). Basic and acidic residues predominate over residues Gly273–Asn282. Residues Ala283–Ser294 are compositionally biased toward low complexity. The tr-type G domain maps to Ser394–Lys563. Residues Gly403–Thr410 are G1. Gly403–Thr410 provides a ligand contact to GTP. Positions Gly428–His432 are G2. The G3 stretch occupies residues Asp449–Gly452. GTP contacts are provided by residues Asp449 to His453 and Asn503 to Asp506. Residues Asn503 to Asp506 are G4. Residues Ser539–Lys541 form a G5 region.

This sequence belongs to the TRAFAC class translation factor GTPase superfamily. Classic translation factor GTPase family. IF-2 subfamily.

It is found in the cytoplasm. Its function is as follows. One of the essential components for the initiation of protein synthesis. Protects formylmethionyl-tRNA from spontaneous hydrolysis and promotes its binding to the 30S ribosomal subunits. Also involved in the hydrolysis of GTP during the formation of the 70S ribosomal complex. The protein is Translation initiation factor IF-2 of Shewanella sediminis (strain HAW-EB3).